Consider the following 225-residue polypeptide: NAD(P)H-quinone oxidoreductase subunit K, chloroplastic (225 aa).

Positions 43, 44, 108, and 139 each coordinate [4Fe-4S] cluster.

Belongs to the complex I 20 kDa subunit family. As to quaternary structure, NDH is composed of at least 16 different subunits, 5 of which are encoded in the nucleus. It depends on [4Fe-4S] cluster as a cofactor.

The protein resides in the plastid. It is found in the chloroplast thylakoid membrane. The catalysed reaction is a plastoquinone + NADH + (n+1) H(+)(in) = a plastoquinol + NAD(+) + n H(+)(out). It catalyses the reaction a plastoquinone + NADPH + (n+1) H(+)(in) = a plastoquinol + NADP(+) + n H(+)(out). Its function is as follows. NDH shuttles electrons from NAD(P)H:plastoquinone, via FMN and iron-sulfur (Fe-S) centers, to quinones in the photosynthetic chain and possibly in a chloroplast respiratory chain. The immediate electron acceptor for the enzyme in this species is believed to be plastoquinone. Couples the redox reaction to proton translocation, and thus conserves the redox energy in a proton gradient. The chain is NAD(P)H-quinone oxidoreductase subunit K, chloroplastic from Populus alba (White poplar).